An 83-amino-acid chain; its full sequence is Large ribosomal subunit protein bL27 (83 aa).

The protein belongs to the bacterial ribosomal protein bL27 family.

The polypeptide is Large ribosomal subunit protein bL27 (Treponema denticola (strain ATCC 35405 / DSM 14222 / CIP 103919 / JCM 8153 / KCTC 15104)).